Reading from the N-terminus, the 346-residue chain is Cyclin-dependent kinase 20 (346 aa).

A Protein kinase domain is found at 4–288; sequence YCILGRIGEG…ASQALLHQYF (285 aa). Residues 10-18 and lysine 33 contribute to the ATP site; that span reads IGEGAHGIV. Aspartate 127 acts as the Proton acceptor in catalysis. The disordered stretch occupies residues 298–324; the sequence is SELPIPQRPGGPAPKAHPGPPHVHDFH. Over residues 303 to 318 the composition is skewed to pro residues; the sequence is PQRPGGPAPKAHPGPP.

It belongs to the protein kinase superfamily. CMGC Ser/Thr protein kinase family. CDC2/CDKX subfamily. As to quaternary structure, monomer. Interacts with MAK. Interacts with TBC1D32.

The protein resides in the nucleus. It is found in the cytoplasm. Its subcellular location is the cell projection. The protein localises to the cilium. The enzyme catalyses L-seryl-[protein] + ATP = O-phospho-L-seryl-[protein] + ADP + H(+). It carries out the reaction L-threonyl-[protein] + ATP = O-phospho-L-threonyl-[protein] + ADP + H(+). Functionally, involved in cell growth. Activates CDK2, a kinase involved in the control of the cell cycle, by phosphorylating residue 'Thr-160'. Required for high-level Shh responses in the developing neural tube. Together with TBC1D32, controls the structure of the primary cilium by coordinating assembly of the ciliary membrane and axoneme, allowing GLI2 to be properly activated in response to SHH signaling. In Mus musculus (Mouse), this protein is Cyclin-dependent kinase 20 (Cdk20).